Here is a 276-residue protein sequence, read N- to C-terminus: Octanoyltransferase LipM (276 aa).

One can recognise a BPL/LPL catalytic domain in the interval 33-247 (GELKPTLRFY…GFKDAFSLTF (215 aa)). Cys-150 serves as the catalytic Acyl-thioester intermediate.

This sequence belongs to the octanoyltransferase LipM family. As to quaternary structure, monomer.

It catalyses the reaction octanoyl-[ACP] + L-lysyl-[protein] = N(6)-octanoyl-L-lysyl-[protein] + holo-[ACP] + H(+). The protein operates within protein modification; protein lipoylation via endogenous pathway; protein N(6)-(lipoyl)lysine from octanoyl-[acyl-carrier-protein]. Catalyzes the transfer of endogenously produced octanoic acid from octanoyl-acyl-carrier-protein onto the lipoyl domain of GcvH, an intermediate carrier during protein lipoylation. The protein is Octanoyltransferase LipM of Exiguobacterium sp. (strain ATCC BAA-1283 / AT1b).